Here is a 554-residue protein sequence, read N- to C-terminus: Hydroxylamine reductase (554 aa).

[2Fe-2S] cluster is bound by residues Cys3, Cys6, Cys18, and Cys25. Residues His252, Glu276, Cys320, Cys408, Cys436, Cys461, Glu495, and Lys497 each contribute to the hybrid [4Fe-2O-2S] cluster site. Cys408 is modified (cysteine persulfide).

Belongs to the HCP family. The cofactor is [2Fe-2S] cluster. Hybrid [4Fe-2O-2S] cluster serves as cofactor.

The protein localises to the cytoplasm. It carries out the reaction A + NH4(+) + H2O = hydroxylamine + AH2 + H(+). Catalyzes the reduction of hydroxylamine to form NH(3) and H(2)O. The protein is Hydroxylamine reductase of Shewanella baltica (strain OS185).